The primary structure comprises 116 residues: Large ribosomal subunit protein uL18 (116 aa).

This sequence belongs to the universal ribosomal protein uL18 family. In terms of assembly, part of the 50S ribosomal subunit; part of the 5S rRNA/L5/L18/L25 subcomplex. Contacts the 5S and 23S rRNAs.

Functionally, this is one of the proteins that bind and probably mediate the attachment of the 5S RNA into the large ribosomal subunit, where it forms part of the central protuberance. The chain is Large ribosomal subunit protein uL18 from Pseudomonas fluorescens (strain SBW25).